A 445-amino-acid polypeptide reads, in one-letter code: MAAQVPTEALKELNVAEGSQKPGATAQSKTDAAGDEHGGDDSEDEADGHVDGAAPTGEATKKKKKRKPKKKKKHPTSQTDPPRVMISQLFPNKAYPKGEEVEYKDENNYRTTNEEKRHLDNLNSDFLADFREAAEIHRQVRQWTQKTVKPGQTLTEIAEGIENSVRALTGHDGLTEGDAMKAGMGFPCGLSLNHCAAHYTPNAGNKMVLQQEDVMKVDFGVHVNGRIVDSAFTMAFEPKYDNLLQAVKDATNAGIREAGIDARVGEIGGVIQEVMESFEVEIDGTTYPVKSIRNLTGHNILPYSIHGTKAVPIVKSNDQTKMEEGDVFAIETFGSTGNGYVRDDMETSHYAKRGDSQHVDLRLSSAKNLLNVINKNFGTLPFCRRYLDRLGSDKYLLGLNSLVNSGIVEAYPPLCDKKGSYTAQFEHTILIRPTVKEVVSRGDDY.

Residues 1-99 (MAAQVPTEAL…FPNKAYPKGE (99 aa)) form a disordered region. The span at 61–75 (KKKKKRKPKKKKKHP) shows a compositional bias: basic residues. H198 contacts substrate. A divalent metal cation contacts are provided by D218, D229, and H298. H306 contributes to the substrate binding site. Positions 331 and 426 each coordinate a divalent metal cation.

Belongs to the peptidase M24A family. Methionine aminopeptidase eukaryotic type 2 subfamily. Requires Co(2+) as cofactor. The cofactor is Zn(2+). Mn(2+) is required as a cofactor. Fe(2+) serves as cofactor.

Its subcellular location is the cytoplasm. The enzyme catalyses Release of N-terminal amino acids, preferentially methionine, from peptides and arylamides.. Functionally, cotranslationally removes the N-terminal methionine from nascent proteins. The N-terminal methionine is often cleaved when the second residue in the primary sequence is small and uncharged (Met-Ala-, Cys, Gly, Pro, Ser, Thr, or Val). The protein is Methionine aminopeptidase 2-1 of Fusarium vanettenii (strain ATCC MYA-4622 / CBS 123669 / FGSC 9596 / NRRL 45880 / 77-13-4) (Fusarium solani subsp. pisi).